The sequence spans 305 residues: UDP-3-O-acyl-N-acetylglucosamine deacetylase (305 aa).

His78, His237, and Asp241 together coordinate Zn(2+). The active-site Proton donor is the His264.

The protein belongs to the LpxC family. Zn(2+) serves as cofactor.

The catalysed reaction is a UDP-3-O-[(3R)-3-hydroxyacyl]-N-acetyl-alpha-D-glucosamine + H2O = a UDP-3-O-[(3R)-3-hydroxyacyl]-alpha-D-glucosamine + acetate. The protein operates within glycolipid biosynthesis; lipid IV(A) biosynthesis; lipid IV(A) from (3R)-3-hydroxytetradecanoyl-[acyl-carrier-protein] and UDP-N-acetyl-alpha-D-glucosamine: step 2/6. Its function is as follows. Catalyzes the hydrolysis of UDP-3-O-myristoyl-N-acetylglucosamine to form UDP-3-O-myristoylglucosamine and acetate, the committed step in lipid A biosynthesis. This is UDP-3-O-acyl-N-acetylglucosamine deacetylase from Burkholderia multivorans (strain ATCC 17616 / 249).